A 419-amino-acid polypeptide reads, in one-letter code: Tyrosine--tRNA ligase 2 (419 aa).

Tyrosine 34 provides a ligand contact to L-tyrosine. A 'HIGH' region motif is present at residues 39–48 (PTGDSMHIGH). L-tyrosine contacts are provided by tyrosine 168 and glutamine 172. Positions 230-234 (KFGKS) match the 'KMSKS' region motif. Lysine 233 contacts ATP. Residues 352–418 (KNIVEWLVDL…GKKNYSLVKL (67 aa)) form the S4 RNA-binding domain.

Belongs to the class-I aminoacyl-tRNA synthetase family. TyrS type 1 subfamily. As to quaternary structure, homodimer.

It localises to the cytoplasm. It catalyses the reaction tRNA(Tyr) + L-tyrosine + ATP = L-tyrosyl-tRNA(Tyr) + AMP + diphosphate + H(+). In terms of biological role, catalyzes the attachment of tyrosine to tRNA(Tyr) in a two-step reaction: tyrosine is first activated by ATP to form Tyr-AMP and then transferred to the acceptor end of tRNA(Tyr). The chain is Tyrosine--tRNA ligase 2 from Bacillus thuringiensis subsp. konkukian (strain 97-27).